A 303-amino-acid chain; its full sequence is Glycine--tRNA ligase alpha subunit (303 aa).

This sequence belongs to the class-II aminoacyl-tRNA synthetase family. In terms of assembly, tetramer of two alpha and two beta subunits.

It localises to the cytoplasm. It catalyses the reaction tRNA(Gly) + glycine + ATP = glycyl-tRNA(Gly) + AMP + diphosphate. This Salmonella paratyphi A (strain ATCC 9150 / SARB42) protein is Glycine--tRNA ligase alpha subunit.